A 241-amino-acid chain; its full sequence is Phosphatidylcholine synthase (241 aa).

Over 1–15 the chain is Cytoplasmic; the sequence is MKFFNYRRVPYAEIR. Residues 16-36 form a helical membrane-spanning segment; it reads AFSVHILTASGSFLAFLGVVA. Residues 37-41 are Periplasmic-facing; that stretch reads AAEHR. A helical membrane pass occupies residues 42–62; it reads FVDMFWWLGLALLVDGIDGPI. At 63–76 the chain is on the cytoplasmic side; it reads ARKVQVKEVLPNWS. The chain crosses the membrane as a helical span at residues 77–97; the sequence is GDTLDNVIDYVTYVLLPAFAL. Residues 98-100 lie on the Periplasmic side of the membrane; sequence YQS. Residues 101-121 form a helical membrane-spanning segment; sequence GMIGEPWSFVAAGAIVVSSAI. Over 122–133 the chain is Cytoplasmic; it reads YYADMGMKTDEY. The chain crosses the membrane as a helical span at residues 134–154; sequence FFSGFPVVWNMVVFTLFVIQA. At 155–156 the chain is on the periplasmic side; sequence SE. The helical transmembrane segment at 157 to 177 threads the bilayer; that stretch reads VTASIVVFLSVILTFLPINFL. The Cytoplasmic portion of the chain corresponds to 178–187; the sequence is HPVRVKRLRP. Residues 188-208 traverse the membrane as a helical segment; that stretch reads LNLGIFLVWSVLGMYALLLHF. Over 209 to 211 the chain is Periplasmic; the sequence is ETP. The helical transmembrane segment at 212 to 232 threads the bilayer; it reads PWVVVGVVATGLYLYVIGFIL. Over 233–241 the chain is Cytoplasmic; it reads QIFPKLGRA.

Belongs to the CDP-alcohol phosphatidyltransferase class-I family. Requires Mn(2+) as cofactor.

Its subcellular location is the cell inner membrane. It catalyses the reaction a CDP-1,2-diacyl-sn-glycerol + choline = a 1,2-diacyl-sn-glycero-3-phosphocholine + CMP + H(+). Its activity is regulated as follows. Activated by CDP-diacylglycerol especially in the presence of Triton X-100 (0.1% w/v) at concentrations where micelles are formed. Maximal activation by Triton X-100 at 0.2% w/v, but higher concentrations become inhibitory. Inhibited by EDTA and high concentrations of choline. Condenses choline with CDP-diglyceride to produce phosphatidylcholine and CMP. The sequence is that of Phosphatidylcholine synthase (pcs) from Rhizobium meliloti (strain 1021) (Ensifer meliloti).